A 595-amino-acid chain; its full sequence is MLPVQTSNLAAAFTDAVRALAPADAALPAVTFERPKAAAHGDLACNIAMQVARALKSNPRELAQRIVAMVQADPRAAELVAGMEIAGPGFINLRLTPAAKADVLRAVLSEGDGYGAQERGMHGNVLVEFVSANPTGPLHVGHGRQAALGDALANLLSWQGYDVHREFYYNDAGVQIQNLAVSVQARTRGFKPGDANWPEAAYNGDYIGDIAADFLAGKTVSASDGEPVTASGNPEDLDSIRKFAVTYLRNEQDIDLQAFGVKFDHYYLESSLYTDGRVEAAVQGLVGKGKTYESEGALWLRTTDDGDDKDRVMKKTDGTYTYFVPDVAYHTTKWERGFTKVINVQGSDHHGTIARVRAGLQGLDIGIPKGYPDYVLHKMVTVMKNGEEVKISKRAGSYVTVRDLIEWSNGGDETIRGCLDAGVADWPEHFTRGRDAVRFFLLSRKADTEFVFDVDLALKQNDENPVYYVQYAHARICSIFESWGGADWESRLAELAGTDLAAVTGADASPQALALGQRLAEFPEMLAAAAGELAPHAVAFYLRDLAGDFHAFYNADRVLVDDEAVKRARLALLAATRQVLRNGLAVIGVSAPRRM.

The 'HIGH' region signature appears at 132-142 (ANPTGPLHVGH).

Belongs to the class-I aminoacyl-tRNA synthetase family. As to quaternary structure, monomer.

The protein resides in the cytoplasm. It catalyses the reaction tRNA(Arg) + L-arginine + ATP = L-arginyl-tRNA(Arg) + AMP + diphosphate. The chain is Arginine--tRNA ligase from Cupriavidus pinatubonensis (strain JMP 134 / LMG 1197) (Cupriavidus necator (strain JMP 134)).